Here is a 404-residue protein sequence, read N- to C-terminus: Inner membrane transport protein YdiM (404 aa).

Topologically, residues 1–5 (MKNPY) are periplasmic. Residues 6 to 26 (FPTALGLYFNYLVHGMGVLLM) form a helical membrane-spanning segment. Residues 27 to 43 (SLNMASLETLWQTNAAG) are Cytoplasmic-facing. A helical transmembrane segment spans residues 44–64 (VSIVISSLGIGRLSVLLFAGL). Over 65–84 (LSDRFGRRPFIMLGMCCYMA) the chain is Periplasmic. Residues 85–105 (FFFGILQTNNIIIAYVFGFLA) traverse the membrane as a helical segment. The Cytoplasmic segment spans residues 106 to 132 (GMANSFLDAGTYPSLMEAFPRSPGTAN). The helical transmembrane segment at 133–153 (ILIKAFVSSGQFLLPLIISLL) threads the bilayer. The Periplasmic segment spans residues 154 to 157 (VWAE). The chain crosses the membrane as a helical span at residues 158 to 178 (LWFGWSFMIAAGIMFINALFL). At 179–206 (YRCTFPPHPGRRLPVIKKTTSSTEHRCS) the chain is on the cytoplasmic side. A helical transmembrane segment spans residues 207–227 (IIDLASYTLYGYISMATFYLV). Over 228 to 246 (SQWLAQYGQFVAGMSYTMS) the chain is Periplasmic. The helical transmembrane segment at 247–267 (IKLLSIYTVGSLLCVFITAPL) threads the bilayer. Topologically, residues 268–273 (IRNTVR) are cytoplasmic. A helical membrane pass occupies residues 274–294 (PTTLLMLYTFISFIALFTVCL). Over 295–296 (HP) the chain is Periplasmic. Residues 297-317 (TFYVVIIFAFVIGFTSAGGVV) traverse the membrane as a helical segment. The Cytoplasmic segment spans residues 318–336 (QIGLTLMAERFPYAKGKAT). A helical transmembrane segment spans residues 337-357 (GIYYSAGSIATFTIPLITAHL). The Periplasmic segment spans residues 358 to 364 (SQRSIAD). The helical transmembrane segment at 365–385 (IMWFDTAIAAIGFLLALFIGL) threads the bilayer. At 386–404 (RSRKKTRHHSLKENVAPGG) the chain is on the cytoplasmic side.

Belongs to the major facilitator superfamily.

Its subcellular location is the cell inner membrane. In Escherichia coli (strain K12), this protein is Inner membrane transport protein YdiM (ydiM).